The chain runs to 431 residues: UDP-N-acetylmuramate--L-alanine ligase (431 aa).

108–114 (GAHGKST) is an ATP binding site.

It belongs to the MurCDEF family.

The protein resides in the cytoplasm. It catalyses the reaction UDP-N-acetyl-alpha-D-muramate + L-alanine + ATP = UDP-N-acetyl-alpha-D-muramoyl-L-alanine + ADP + phosphate + H(+). Its pathway is cell wall biogenesis; peptidoglycan biosynthesis. Functionally, cell wall formation. In Campylobacter jejuni subsp. doylei (strain ATCC BAA-1458 / RM4099 / 269.97), this protein is UDP-N-acetylmuramate--L-alanine ligase.